We begin with the raw amino-acid sequence, 930 residues long: Translation initiation factor IF-2 (930 aa).

Positions 50-67 (FKPAAAPKVEAKPAAPKV) are enriched in low complexity. Disordered regions lie at residues 50-217 (FKPA…SSEE) and 260-346 (EVVP…HELP). 2 stretches are compositionally biased toward basic and acidic residues: residues 68–90 (SAEK…EAKP) and 110–125 (FKAE…AERR). Over residues 129-141 (KGNNRDQQQNGNR) the composition is skewed to low complexity. Composition is skewed to basic and acidic residues over residues 157–167 (RDNRRFNDQAK) and 262–295 (VPEK…DGPR). Residues 309–318 (NQKNSNWNNN) show a composition bias toward low complexity. Basic and acidic residues predominate over residues 337-346 (VTERKFHELP). The region spanning 432–599 (ERPPVVTIMG…TVLLVAEIQE (168 aa)) is the tr-type G domain. The tract at residues 441–448 (GHVDHGKT) is G1. 441 to 448 (GHVDHGKT) is a GTP binding site. The segment at 466 to 470 (GITQH) is G2. The tract at residues 487–490 (DTPG) is G3. GTP-binding positions include 487–491 (DTPGH) and 541–544 (NKID). Positions 541-544 (NKID) are G4. The G5 stretch occupies residues 577-579 (SAK).

This sequence belongs to the TRAFAC class translation factor GTPase superfamily. Classic translation factor GTPase family. IF-2 subfamily.

Its subcellular location is the cytoplasm. Its function is as follows. One of the essential components for the initiation of protein synthesis. Protects formylmethionyl-tRNA from spontaneous hydrolysis and promotes its binding to the 30S ribosomal subunits. Also involved in the hydrolysis of GTP during the formation of the 70S ribosomal complex. This chain is Translation initiation factor IF-2, found in Streptococcus pneumoniae (strain P1031).